The chain runs to 124 residues: Apolipoprotein C-IV (124 aa).

An N-terminal signal peptide occupies residues 1-27 (MSLLRCRPRDLPSVSLSVLFLVSFVAS). The N-linked (GlcNAc...) asparagine glycan is linked to Asn-107.

It belongs to the apolipoprotein C4 family. Expressed by the liver and secreted in plasma.

The protein localises to the secreted. Functionally, may participate in lipoprotein metabolism. In Mus musculus (Mouse), this protein is Apolipoprotein C-IV (Apoc4).